The sequence spans 110 residues: Cytochrome subunit of sulfide dehydrogenase (110 aa).

A signal peptide spans 1–16 (MLAAAPLLLASGNGFA). Residues Cys-41, Cys-44, His-45, and Met-83 each contribute to the heme c site.

As to quaternary structure, dimer of one cytochrome and one flavoprotein. Post-translationally, binds 1 heme c group covalently per subunit.

The protein localises to the periplasm. In terms of biological role, monoheme cytochrome that function as the electron transport subunit of sulfide dehydrogenase. This is Cytochrome subunit of sulfide dehydrogenase (fccA) from Chlorobaculum tepidum (strain ATCC 49652 / DSM 12025 / NBRC 103806 / TLS) (Chlorobium tepidum).